A 338-amino-acid chain; its full sequence is RNA 3'-terminal phosphate cyclase (338 aa).

ATP contacts are provided by residues Q103 and 283–287 (YLADQ). H308 serves as the catalytic Tele-AMP-histidine intermediate.

The protein belongs to the RNA 3'-terminal cyclase family. Type 1 subfamily.

The protein localises to the cytoplasm. The catalysed reaction is a 3'-end 3'-phospho-ribonucleotide-RNA + ATP = a 3'-end 2',3'-cyclophospho-ribonucleotide-RNA + AMP + diphosphate. Functionally, catalyzes the conversion of 3'-phosphate to a 2',3'-cyclic phosphodiester at the end of RNA. The mechanism of action of the enzyme occurs in 3 steps: (A) adenylation of the enzyme by ATP; (B) transfer of adenylate to an RNA-N3'P to produce RNA-N3'PP5'A; (C) and attack of the adjacent 2'-hydroxyl on the 3'-phosphorus in the diester linkage to produce the cyclic end product. The biological role of this enzyme is unknown but it is likely to function in some aspects of cellular RNA processing. The protein is RNA 3'-terminal phosphate cyclase of Escherichia coli O8 (strain IAI1).